The chain runs to 97 residues: Mapk-regulated corepressor-interacting protein 1 (97 aa).

The interval Met1–Thr30 is disordered. Ser21 and Ser24 each carry phosphoserine. Position 30 is a phosphothreonine (Thr30). Tyr41 is modified (phosphotyrosine). At Lys79 the chain carries N6-acetyllysine. The short motif at Pro80 to Ser84 is the PXDLS motif element.

It belongs to the MCRIP family. Interacts (unphosphorylated form, via the PXDLS motif) with CTBP1, competitively inhibiting CTBP-ZEB1 interaction. Interacts with CTBP2. Interacts with MCRIP2. Interacts with DDX6. Phosphorylation by MAPK3/1 (ERK1/2) regulates MCRIP1 binding to CTBP(s).

It localises to the nucleus. The protein resides in the cytoplasm. Its subcellular location is the stress granule. The phosphorylation status of MCRIP1 functions as a molecular switch to regulate epithelial-mesenchymal transition. Unphosphorylated MCRIP1 binds to and inhibits the transcriptional corepressor CTBP(s). When phosphorylated by MAPK/ERK, MCRIP1 releases CTBP(s) resulting in transcriptional silencing of the E-cadherin gene and induction of epithelial-mesenchymal transition. The protein is Mapk-regulated corepressor-interacting protein 1 of Homo sapiens (Human).